A 352-amino-acid chain; its full sequence is Photosystem II D2 protein (352 aa).

Residues 40–60 form a helical membrane-spanning segment; the sequence is CAFMALGGWLTGTTFVTSWYT. H117 provides a ligand contact to chlorophyll a. Residues 124–140 form a helical membrane-spanning segment; the sequence is GFMLRQFEIARLVGIRP. Residues Q129 and N142 each coordinate pheophytin a. A helical transmembrane segment spans residues 152-165; it reads VFVSVFLMYPLGQS. H197 contributes to the chlorophyll a binding site. Residues 207–227 traverse the membrane as a helical segment; the sequence is GALLCAIHGATVENTLFEDSD. A plastoquinone is bound by residues H214 and F261. Residue H214 coordinates Fe cation. Residue H268 participates in Fe cation binding. A helical membrane pass occupies residues 278–294; that stretch reads GLWMSSVGIVGLALNLR.

Belongs to the reaction center PufL/M/PsbA/D family. PSII is composed of 1 copy each of membrane proteins PsbA, PsbB, PsbC, PsbD, PsbE, PsbF, PsbH, PsbI, PsbJ, PsbK, PsbL, PsbM, PsbT, PsbX, PsbY, PsbZ, Psb30/Ycf12, peripheral proteins PsbO, CyanoQ (PsbQ), PsbU, PsbV and a large number of cofactors. It forms dimeric complexes. The D1/D2 heterodimer binds P680, chlorophylls that are the primary electron donor of PSII, and subsequent electron acceptors. It shares a non-heme iron and each subunit binds pheophytin, quinone, additional chlorophylls, carotenoids and lipids. There is also a Cl(-1) ion associated with D1 and D2, which is required for oxygen evolution. The PSII complex binds additional chlorophylls, carotenoids and specific lipids. is required as a cofactor.

Its subcellular location is the cellular thylakoid membrane. The enzyme catalyses 2 a plastoquinone + 4 hnu + 2 H2O = 2 a plastoquinol + O2. Photosystem II (PSII) is a light-driven water:plastoquinone oxidoreductase that uses light energy to abstract electrons from H(2)O, generating O(2) and a proton gradient subsequently used for ATP formation. It consists of a core antenna complex that captures photons, and an electron transfer chain that converts photonic excitation into a charge separation. The D1/D2 (PsbA/PsbD) reaction center heterodimer binds P680, the primary electron donor of PSII as well as several subsequent electron acceptors. D2 is needed for assembly of a stable PSII complex. This chain is Photosystem II D2 protein, found in Picosynechococcus sp. (strain ATCC 27264 / PCC 7002 / PR-6) (Agmenellum quadruplicatum).